We begin with the raw amino-acid sequence, 418 residues long: Pigment epithelium-derived factor (418 aa).

An N-terminal signal peptide occupies residues Met1–Cys19. The residue at position 20 (Gln20) is a Pyrrolidone carboxylic acid. Residues Gln20–Leu39 form a disordered region. Ser24 and Ser114 each carry phosphoserine; by CK2. The residue at position 227 (Ser227) is a Phosphoserine; by PKA. A glycan (N-linked (GlcNAc...) (complex) asparagine) is linked at Asn285. An O-glycosylated at one site region spans residues Thr371–Thr383.

It belongs to the serpin family. As to quaternary structure, interacts with PNPLA2; this interaction stimulates the phospholipase A2 activity of PNPLA2. The N-terminus is blocked. Extracellular phosphorylation enhances antiangiogenic activity. Post-translationally, N- and O-glycosylated. O-glycosylated with a core 1 or possibly core 8 glycan. In terms of tissue distribution, retinal pigment epithelial cells and blood plasma.

It localises to the secreted. Its subcellular location is the melanosome. Neurotrophic protein; induces extensive neuronal differentiation in retinoblastoma cells. Potent inhibitor of angiogenesis. As it does not undergo the S (stressed) to R (relaxed) conformational transition characteristic of active serpins, it exhibits no serine protease inhibitory activity. The chain is Pigment epithelium-derived factor (SERPINF1) from Homo sapiens (Human).